We begin with the raw amino-acid sequence, 346 residues long: 4-amino-5-hydroxymethyl-2-methylpyrimidine phosphate synthase (346 aa).

Lys-62 carries the post-translational modification N6-(pyridoxal phosphate)lysine. His-66 is an active-site residue. Position 114–117 (114–117) interacts with pyridoxal 5'-phosphate; sequence GEFG. The short motif at 194–198 is the CCCFC; essential for catalytic activity, may be the site of iron coordination element; that stretch reads CCCFC.

It belongs to the NMT1/THI5 family. In terms of assembly, homodimer. Fe cation serves as cofactor.

Its subcellular location is the cytoplasm. It is found in the nucleus. It carries out the reaction N(6)-(pyridoxal phosphate)-L-lysyl-[4-amino-5-hydroxymethyl-2-methylpyrimidine phosphate synthase] + L-histidyl-[4-amino-5-hydroxymethyl-2-methylpyrimidine phosphate synthase] + 2 Fe(3+) + 4 H2O = L-lysyl-[4-amino-5-hydroxymethyl-2-methylpyrimidine phosphate synthase] + (2S)-2-amino-5-hydroxy-4-oxopentanoyl-[4-amino-5-hydroxymethyl-2-methylpyrimidine phosphate synthase] + 4-amino-2-methyl-5-(phosphooxymethyl)pyrimidine + 3-oxopropanoate + 2 Fe(2+) + 2 H(+). Its pathway is cofactor biosynthesis; thiamine diphosphate biosynthesis. Its function is as follows. Responsible for the formation of the pyrimidine heterocycle in the thiamine biosynthesis pathway. Catalyzes the formation of hydroxymethylpyrimidine phosphate (HMP-P) from histidine and pyridoxal phosphate (PLP). The protein uses PLP and the active site histidine to form HMP-P, generating an inactive enzyme. The enzyme can only undergo a single turnover, which suggests it is a suicide enzyme. The protein is 4-amino-5-hydroxymethyl-2-methylpyrimidine phosphate synthase of Schizosaccharomyces pombe (strain 972 / ATCC 24843) (Fission yeast).